A 474-amino-acid polypeptide reads, in one-letter code: NAD(P) transhydrogenase subunit beta (474 aa).

The next 9 helical transmembrane spans lie at 4 to 24 (GLVQ…LAGL), 46 to 66 (IATI…AMII), 83 to 103 (MPEL…LVGF), 132 to 152 (VLTN…AVTF), 181 to 200 (LAAL…NPES), 202 to 222 (FPVL…VASI), 229 to 249 (VVVS…GFIL), 253 to 273 (LLIV…YIMC), and 321 to 341 (VIIT…VADI).

Belongs to the PNT beta subunit family. Heterodimer of an alpha and a beta chain.

The protein resides in the cell inner membrane. It carries out the reaction NAD(+) + NADPH + H(+)(in) = NADH + NADP(+) + H(+)(out). In terms of biological role, the transhydrogenation between NADH and NADP is coupled to respiration and ATP hydrolysis and functions as a proton pump across the membrane. The polypeptide is NAD(P) transhydrogenase subunit beta (pntB) (Haemophilus influenzae (strain ATCC 51907 / DSM 11121 / KW20 / Rd)).